The chain runs to 443 residues: Cobyrinate a,c-diamide synthase (443 aa).

The GATase cobBQ-type domain maps to 248 to 433 (KIAVAYDKAF…LHNHAVANPY (186 aa)). C327 acts as the Nucleophile in catalysis.

The protein belongs to the CobB/CbiA family. It depends on Mg(2+) as a cofactor.

The enzyme catalyses cob(II)yrinate + 2 L-glutamine + 2 ATP + 2 H2O = cob(II)yrinate a,c diamide + 2 L-glutamate + 2 ADP + 2 phosphate + 2 H(+). It catalyses the reaction Ni-sirohydrochlorin + 2 L-glutamine + 2 ATP + 2 H2O = Ni-sirohydrochlorin a,c-diamide + 2 L-glutamate + 2 ADP + 2 phosphate + 2 H(+). The protein operates within cofactor biosynthesis; adenosylcobalamin biosynthesis; cob(II)yrinate a,c-diamide from sirohydrochlorin (anaerobic route): step 10/10. Its function is as follows. Catalyzes the ATP-dependent amidation of the two carboxylate groups at positions a and c of cobyrinate, using either L-glutamine or ammonia as the nitrogen source. Involved in the biosynthesis of the unique nickel-containing tetrapyrrole coenzyme F430, the prosthetic group of methyl-coenzyme M reductase (MCR), which plays a key role in methanogenesis and anaerobic methane oxidation. Catalyzes the ATP-dependent amidation of the two carboxylate groups at positions a and c of Ni-sirohydrochlorin, using L-glutamine or ammonia as the nitrogen source. In Methanocaldococcus jannaschii (strain ATCC 43067 / DSM 2661 / JAL-1 / JCM 10045 / NBRC 100440) (Methanococcus jannaschii), this protein is Cobyrinate a,c-diamide synthase.